The sequence spans 386 residues: tRNA-specific adenosine deaminase subunit tad2 (386 aa).

Residues 212 to 322 enclose the CMP/dCMP-type deaminase domain; that stretch reads TQHETYMKLA…GNDRFGGCGS (111 aa). His263 lines the Zn(2+) pocket. Catalysis depends on Glu265, which acts as the Proton donor. Residues Cys293 and Cys296 each contribute to the Zn(2+) site.

Belongs to the cytidine and deoxycytidylate deaminase family. ADAT2 subfamily. In terms of assembly, heterodimer with Tad3. The cofactor is Zn(2+).

The catalysed reaction is adenosine(34) in tRNA + H2O + H(+) = inosine(34) in tRNA + NH4(+). Functionally, structural subunit of tRNA-specific adenosine deaminase, which deaminates adenosine-34 (the first, also called wobble position of the anticodon) to inosine in many tRNAs. Inosine-34 allows the decoding of 3 different nucleotides at the third position of mRNA codons, as inosine is able to pair with U, C, and A. The wobble inosine tRNA modification is essential for cell cycle progression in the G1/S and G2/M transitions in fission yeast. The protein is tRNA-specific adenosine deaminase subunit tad2 (tad2) of Schizosaccharomyces pombe (strain 972 / ATCC 24843) (Fission yeast).